Here is a 487-residue protein sequence, read N- to C-terminus: 3-octaprenyl-4-hydroxybenzoate carboxy-lyase (487 aa).

Mn(2+) is bound at residue asparagine 172. Residues 175–177 (IYR), 189–191 (RWL), and 194–195 (RG) contribute to the prenylated FMN site. Glutamate 238 is a Mn(2+) binding site. Catalysis depends on aspartate 287, which acts as the Proton donor.

Belongs to the UbiD family. In terms of assembly, homohexamer. It depends on prenylated FMN as a cofactor. The cofactor is Mn(2+).

It is found in the cell membrane. The catalysed reaction is a 4-hydroxy-3-(all-trans-polyprenyl)benzoate + H(+) = a 2-(all-trans-polyprenyl)phenol + CO2. It functions in the pathway cofactor biosynthesis; ubiquinone biosynthesis. Its function is as follows. Catalyzes the decarboxylation of 3-octaprenyl-4-hydroxy benzoate to 2-octaprenylphenol, an intermediate step in ubiquinone biosynthesis. The polypeptide is 3-octaprenyl-4-hydroxybenzoate carboxy-lyase (Actinobacillus pleuropneumoniae serotype 3 (strain JL03)).